The following is an 828-amino-acid chain: Periplasmic nitrate reductase (828 aa).

A signal peptide (tat-type signal) is located at residues 1 to 31 (MKLSRRSFMKANAVAAAAAAAGLSVPGVARA). The 4Fe-4S Mo/W bis-MGD-type domain occupies 39–95 (IKWDKAPCRFCGTGCGVLVGTQQGRVVACQGDPDAPVNRGLNCIKGYFLPKIMYGKD). [4Fe-4S] cluster is bound by residues Cys-46, Cys-49, Cys-53, and Cys-81. Mo-bis(molybdopterin guanine dinucleotide) is bound by residues Lys-83, Gln-150, Asn-175, Cys-179, 212-219 (WGANMAEM), 243-247 (STYQH), 262-264 (QSD), Met-372, Gln-376, Asn-482, 508-509 (SD), Lys-531, Asp-558, and 718-727 (TGRVLEHWHT). Residue Phe-794 participates in substrate binding. Mo-bis(molybdopterin guanine dinucleotide) contacts are provided by Asn-802 and Lys-819.

It belongs to the prokaryotic molybdopterin-containing oxidoreductase family. NasA/NapA/NarB subfamily. In terms of assembly, component of the periplasmic nitrate reductase NapAB complex composed of NapA and NapB. The cofactor is [4Fe-4S] cluster. Mo-bis(molybdopterin guanine dinucleotide) serves as cofactor. Predicted to be exported by the Tat system. The position of the signal peptide cleavage has not been experimentally proven.

Its subcellular location is the periplasm. It carries out the reaction 2 Fe(II)-[cytochrome] + nitrate + 2 H(+) = 2 Fe(III)-[cytochrome] + nitrite + H2O. Catalytic subunit of the periplasmic nitrate reductase complex NapAB. Receives electrons from NapB and catalyzes the reduction of nitrate to nitrite. This chain is Periplasmic nitrate reductase, found in Escherichia coli O157:H7 (strain EC4115 / EHEC).